Reading from the N-terminus, the 384-residue chain is Ribosomal RNA large subunit methyltransferase G (384 aa).

Belongs to the methyltransferase superfamily. RlmG family.

The protein resides in the cytoplasm. It catalyses the reaction guanosine(1835) in 23S rRNA + S-adenosyl-L-methionine = N(2)-methylguanosine(1835) in 23S rRNA + S-adenosyl-L-homocysteine + H(+). Functionally, specifically methylates the guanine in position 1835 (m2G1835) of 23S rRNA. This Pseudoalteromonas atlantica (strain T6c / ATCC BAA-1087) protein is Ribosomal RNA large subunit methyltransferase G.